Consider the following 837-residue polypeptide: Protein translocase subunit SecA (837 aa).

Residues Q85, 103–107 (GEGKT), and D493 each bind ATP. Residues C821, C823, C832, and H833 each coordinate Zn(2+).

Belongs to the SecA family. Monomer and homodimer. Part of the essential Sec protein translocation apparatus which comprises SecA, SecYEG and auxiliary proteins SecDF. Other proteins may also be involved. Requires Zn(2+) as cofactor.

The protein resides in the cell membrane. It is found in the cytoplasm. The enzyme catalyses ATP + H2O + cellular proteinSide 1 = ADP + phosphate + cellular proteinSide 2.. Its function is as follows. Part of the Sec protein translocase complex. Interacts with the SecYEG preprotein conducting channel. Has a central role in coupling the hydrolysis of ATP to the transfer of proteins into and across the cell membrane, serving as an ATP-driven molecular motor driving the stepwise translocation of polypeptide chains across the membrane. The chain is Protein translocase subunit SecA from Streptococcus pneumoniae serotype 2 (strain D39 / NCTC 7466).